We begin with the raw amino-acid sequence, 388 residues long: MASTAVGLGGGEGDPGAGGPPAGSAHPDDASSMSDDVFEDAETTQARIEELRRRPFGDGSYNPPAAPASVSASITTTTTQQQQQHHNPSHHHQSSHHQPSHHHHHHHHSQLSLTGSHHYHDDAIMAPVQRSATGYPGYRPSREAMQMYAYGTDDYDDDYNDGWRSYRYDEVDMHPAPSNAHQQPFDDTVNHKTILLGDSGVGKTSFLVKYNTGEFRLGSFSATVGIALTNKVVVVDGTRVKLQIWDTAGQERFRSVTHAYYRDAHALLLLYDVTNKTTYDNIRAWLGEIREYAQEDVVIVLIGNKADCSGSERQVKREDGERLGREHNVPFMETSAKTGLNVELSFTAVARQLKSRGYEHGDDGKFNVHDFVRDNTKARSVCAQCRNM.

Positions 1–115 (MASTAVGLGG…HHHSQLSLTG (115 aa)) are disordered. The segment covering 7 to 21 (GLGGGEGDPGAGGPP) has biased composition (gly residues). The segment covering 47-56 (RIEELRRRPF) has biased composition (basic and acidic residues). Residues 67 to 86 (PASVSASITTTTTQQQQQHH) are compositionally biased toward low complexity. The span at 87–109 (NPSHHHQSSHHQPSHHHHHHHHS) shows a compositional bias: basic residues. GTP is bound at residue 197-204 (GDSGVGKT). The Effector region signature appears at 219-228 (SFSATVGIAL). Residues 246–250 (DTAGQ) and 304–307 (NKAD) each bind GTP. C382 carries S-palmitoyl cysteine lipidation. C385 carries the post-translational modification Cysteine methyl ester. The S-geranylgeranyl cysteine moiety is linked to residue C385. A propeptide spans 386–388 (RNM) (removed in mature form).

Belongs to the small GTPase superfamily. Rab family.

It localises to the cell membrane. Participates in exocrine secretion. The chain is Ras-related protein Rab-26 from Drosophila melanogaster (Fruit fly).